Here is a 673-residue protein sequence, read N- to C-terminus: RAS guanyl-releasing protein 4 (673 aa).

2 stretches are compositionally biased toward basic residues: residues 1 to 10 and 20 to 32; these read MNRKDSKRKS and GRGRPRQARRHKT. 2 disordered regions span residues 1–34 and 162–188; these read MNRKDSKRKSHQECPVKTGGRGRPRQARRHKTCP and QSLGDFSSRLSPGGPGPPHPMSSPGLG. The region spanning 49 to 172 is the N-terminal Ras-GEF domain; it reads GMLNEGGCSE…SLGDFSSRLS (124 aa). The Ras-GEF domain occupies 201-432; that stretch reads ETGELAEHLT…YELSYAREPR (232 aa). One can recognise an EF-hand domain in the interval 466 to 501; that stretch reads HVEQLVESVFKNYDPDGRGTISQEDFERLSGNFPFA. Residues 540–590 form a Phorbol-ester/DAG-type zinc finger; it reads LHTFQEVTFRKPTFCNSCSGFLWGVTKQGYRCRDCGLCCHRHCRDQVKVEC. Disordered regions lie at residues 593-618 and 638-673; these read RPGAKGDASPPEAPVPPTPVPQASCG and RHAWTQTESPHPSWEPETVPLPAKASPPTESSKLNS. Residues 603 to 612 show a composition bias toward pro residues; sequence PEAPVPPTPV.

The protein belongs to the RASGRP family.

Its subcellular location is the cytoplasm. It localises to the cell membrane. Functionally, functions as a cation- and diacylglycerol (DAG)-regulated nucleotide exchange factor activating Ras through the exchange of bound GDP for GTP. In neutrophils, participates in a phospholipase C-activating N-formyl peptide-activated GPCR (G protein-coupled receptor) signaling pathway by promoting Ras-mediated activation of PIK3CG/PI3Kgamma to promote neutrophil functional responses. In CD117(+) dendritic cells and mast cells, participates in an lipopolysaccharide (LPS)-activated signaling pathway that stimulates the production of interferon-gamma and other pro-inflammatory cytokines by natural killer (NK) cells. May function in mast cell differentiation. Does not appear to be required for the development of B-cells, DC-cells, T-cells, or NK-cells. In Bos taurus (Bovine), this protein is RAS guanyl-releasing protein 4 (RASGRP4).